The primary structure comprises 495 residues: Aspartyl/glutamyl-tRNA(Asn/Gln) amidotransferase subunit B (495 aa).

It belongs to the GatB/GatE family. GatB subfamily. As to quaternary structure, heterotrimer of A, B and C subunits.

The catalysed reaction is L-glutamyl-tRNA(Gln) + L-glutamine + ATP + H2O = L-glutaminyl-tRNA(Gln) + L-glutamate + ADP + phosphate + H(+). It carries out the reaction L-aspartyl-tRNA(Asn) + L-glutamine + ATP + H2O = L-asparaginyl-tRNA(Asn) + L-glutamate + ADP + phosphate + 2 H(+). Functionally, allows the formation of correctly charged Asn-tRNA(Asn) or Gln-tRNA(Gln) through the transamidation of misacylated Asp-tRNA(Asn) or Glu-tRNA(Gln) in organisms which lack either or both of asparaginyl-tRNA or glutaminyl-tRNA synthetases. The reaction takes place in the presence of glutamine and ATP through an activated phospho-Asp-tRNA(Asn) or phospho-Glu-tRNA(Gln). This is Aspartyl/glutamyl-tRNA(Asn/Gln) amidotransferase subunit B from Methanosarcina acetivorans (strain ATCC 35395 / DSM 2834 / JCM 12185 / C2A).